The chain runs to 358 residues: 3-ketosteroid-9-alpha-monooxygenase, ferredoxin reductase component (358 aa).

The FAD-binding FR-type domain occupies Asp12–Thr124. The region spanning Ala269 to Glu358 is the 2Fe-2S ferredoxin-type domain. [2Fe-2S] cluster-binding residues include Cys305, Cys310, Cys313, and Cys343.

In terms of assembly, monomer. The two-component system 3-ketosteroid-9-alpha-monooxygenase is composed of an oxygenase component KshA and a reductase component KshB. The cofactor is FAD. [2Fe-2S] cluster is required as a cofactor.

The catalysed reaction is androsta-1,4-diene-3,17-dione + 2 reduced [2Fe-2S]-[ferredoxin] + O2 + 2 H(+) = 9alpha-hydroxyandrosta-1,4-diene-3,17-dione + 2 oxidized [2Fe-2S]-[ferredoxin] + H2O. It functions in the pathway lipid metabolism; steroid biosynthesis. In terms of biological role, involved in the degradation of cholesterol. Catalyzes the introduction of a 9a-hydroxyl moiety into 1,4-androstadiene-3,17-dione (ADD) to yield the 9alpha-hydroxy-1,4-androstadiene-3,17-dione (9OHADD) intermediate which spontaneously form 3-hydroxy-9,10-seconandrost-1,3,5(10)-triene-9,17-dione (HSA) via the meta-cleavage of ring B with concomitant aromatization of ring A. The chain is 3-ketosteroid-9-alpha-monooxygenase, ferredoxin reductase component (hmp) from Mycobacterium tuberculosis (strain CDC 1551 / Oshkosh).